The sequence spans 772 residues: Magnetosome formation protease MamE (772 aa).

The Cytoplasmic segment spans residues 1 to 21 (MTMFNGDVEDGGRSNVSCGKD). A helical transmembrane segment spans residues 22-42 (LKRYLMLMGVVALVVLFGAFI). Topologically, residues 43–772 (YRQSSGGLRL…RNGQEFWIVL (730 aa)) are lumenal. Residues H187, D220, and S296 each act as charge relay system in the active site. Residues 374–397 (IAAGTPSPHVDGRQNMDCSNCHDI) carry the MCR (magnetochrome) 1 motif. Residues C391, C394, H395, C437, C440, H441, C488, C491, and H492 each coordinate heme. 2 consecutive short sequence motifs (MCR) follow at residues 420 to 443 (IPAN…CHQF) and 470 to 494 (AIRA…CHQI). Residues 445–558 (GGAAAGPIAF…ALTPLTQRLG (114 aa)) enclose the Cytochrome c domain. 2 PDZ domains span residues 522 to 626 (AINI…LRAG) and 696 to 765 (GATP…HRNG).

In the N-terminal section; belongs to the peptidase S1C family. In terms of assembly, might interact with MamB via PDZ1. It depends on heme as a cofactor. Post-translationally, the protein isolated from magnetosome membranes has a molecular weight of about 36.3 kDa, probably due to C-terminal cleavage. Subject to autocatalytic cleavage; cleavage also requires MamO; these may be the same event.

Its subcellular location is the magnetosome membrane. Its function is as follows. Acts at 2 distinct steps of magnetosome formation; required for correct localization of proteins to the magnetosome while the protease activity is required for maturation of small magnetite crystals into larger, functional ones. Probably cleaves at least itself, MamO and MamP; cleavage requires the putative transprot domain of MamO. Involved in localization of some proteins (at least MamA, MamC, MamF, MamI and MamJ) to the magnetosome. One of 7 genes (mamLQBIEMO) able to induce magnetosome membrane biogenesis; coexpression of mamLQRBIEMO in a deletion of the 17 gene mamAB operon restores magnetosome vesicle formation but not magnetite biosynthesis. The sequence is that of Magnetosome formation protease MamE from Magnetospirillum gryphiswaldense (strain DSM 6361 / JCM 21280 / NBRC 15271 / MSR-1).